Here is a 102-residue protein sequence, read N- to C-terminus: Small ribosomal subunit protein uS10 (102 aa).

The protein belongs to the universal ribosomal protein uS10 family. In terms of assembly, part of the 30S ribosomal subunit.

Its function is as follows. Involved in the binding of tRNA to the ribosomes. The polypeptide is Small ribosomal subunit protein uS10 (Sulfurisphaera tokodaii (strain DSM 16993 / JCM 10545 / NBRC 100140 / 7) (Sulfolobus tokodaii)).